A 654-amino-acid chain; its full sequence is Polyvinylalcohol dehydrogenase (654 aa).

A signal peptide spans 1-32 (MGSHAWGGAVFSAATLIAFGSVVHASGTVAET). A Cytochrome c domain is found at 42-159 (ADQLDGETLY…AANQWNGWST (118 aa)). Heme c is bound by residues Cys-55, Cys-58, and His-59.

This sequence belongs to the bacterial PQQ dehydrogenase family. In terms of assembly, monomer. The cofactor is pyrroloquinoline quinone.

It localises to the periplasm. It catalyses the reaction a polyvinyl alcohol + 2n Fe(III)-[cytochrome c] = an oxidized polyvinyl alcohol + 2n Fe(II)-[cytochrome c] + 2n H(+). In terms of biological role, catalyzes the oxidation of polyvinyl alcohol (PVA) in the polyvinyl alcohol degradation pathway. This chain is Polyvinylalcohol dehydrogenase (pvadh), found in Sphingopyxis sp. (strain 113P3).